Consider the following 440-residue polypeptide: MKVQSLLRIETQLLLGRLLTRSGDQAWDFVVPFALLVIFPGKLQVAAFYYLIVKIGTFLLTPSSGKWIDTHPRIQVVKWGVWLQFFAILAGMVFFGMLDGLVRAGGRESWLLSVLFIALALSGVMASLGSQITDISVGNDLAPSLVAPEKLTHFNSWLRRIDLATEVGAPILAGALFAFHPEQLPLAGLFLIGLWNLVSFVPEYFLLRNVIQRSGLKIKVLTEAQSWKDTFHINLRGSFSDPIFWLILSYALLWLSVLSPHGVLLAAYLKDEMRLPETEIGLFRGLGAVFGLISTVSFPYLVRRLGLISSSRWHLGFQGVTLGIAVTAFAMGSTASVYVFLGCILLSRVGLYGFSNGEFELRQRLIPEGRRGELNSLSSLTTTSATLILFSAGSLLPQTEDFKYLVYVSLAAVLLANVVFIKWSSRQGVVTSGAAEPVES.

The Cytoplasmic portion of the chain corresponds to 1 to 8 (MKVQSLLR). Residues 9-38 (IETQLLLGRLLTRSGDQAWDFVVPFALLVI) traverse the membrane as a helical segment. D24 serves as a coordination point for Ca(2+). Over 39–42 (FPGK) the chain is Extracellular. The helical transmembrane segment at 43 to 69 (LQVAAFYYLIVKIGTFLLTPSSGKWID) threads the bilayer. Residues 70–72 (THP) lie on the Cytoplasmic side of the membrane. A helical membrane pass occupies residues 73-103 (RIQVVKWGVWLQFFAILAGMVFFGMLDGLVR). Q84 provides a ligand contact to Ca(2+). The Extracellular segment spans residues 104-109 (AGGRES). Residues 110–145 (WLLSVLFIALALSGVMASLGSQITDISVGNDLAPSL) traverse the membrane as a helical segment. Topologically, residues 146–147 (VA) are cytoplasmic. The helical transmembrane segment at 148–176 (PEKLTHFNSWLRRIDLATEVGAPILAGAL) threads the bilayer. Residues 177-186 (FAFHPEQLPL) lie on the Extracellular side of the membrane. The chain crosses the membrane as a helical span at residues 187–213 (AGLFLIGLWNLVSFVPEYFLLRNVIQR). The Ca(2+) site is built by N196 and E203. The Cytoplasmic segment spans residues 214–242 (SGLKIKVLTEAQSWKDTFHINLRGSFSDP). A helical membrane pass occupies residues 243 to 271 (IFWLILSYALLWLSVLSPHGVLLAAYLKD). Residues 272–276 (EMRLP) lie on the Extracellular side of the membrane. Residues 277 to 304 (ETEIGLFRGLGAVFGLISTVSFPYLVRR) traverse the membrane as a helical segment. Over 305–306 (LG) the chain is Cytoplasmic. A helical membrane pass occupies residues 307 to 329 (LISSSRWHLGFQGVTLGIAVTAF). Residues 330 to 335 (AMGSTA) are Extracellular-facing. A helical transmembrane segment spans residues 336–365 (SVYVFLGCILLSRVGLYGFSNGEFELRQRL). Topologically, residues 366–370 (IPEGR) are cytoplasmic. The chain crosses the membrane as a helical span at residues 371–395 (RGELNSLSSLTTTSATLILFSAGSL). Residues 396 to 398 (LPQ) are Extracellular-facing. The chain crosses the membrane as a helical span at residues 399–424 (TEDFKYLVYVSLAAVLLANVVFIKWS). Topologically, residues 425 to 440 (SRQGVVTSGAAEPVES) are cytoplasmic.

The protein belongs to the ferroportin (FP) (TC 2.A.100) family. It depends on Ca(2+) as a cofactor.

The protein resides in the cell membrane. In terms of biological role, iron transpoter that exports Fe(2+) from the cell. Also binds to Co(2+) and Ni(2+). May act as a multivalent divalent metal transporter. The transporter is composed of 12 transmembrane (TM) helices organized into N-terminal (TM1-6) and C-terminal (TM7-12) domains. The substrate-binding site is formed at the interface of the two domains and is alternately accessible from either side of the membrane. The transport cycle is viewed as a series of ligand-induced conformational changes that include open outward and open inward states. The chain is Ferreportin (slc39) from Bdellovibrio bacteriovorus (strain ATCC 15356 / DSM 50701 / NCIMB 9529 / HD100).